The chain runs to 349 residues: D-arabinose 1-dehydrogenase (NADP(+)) (349 aa).

Zn(2+)-binding residues include Cys46, His70, Asp99, Cys102, Cys105, Cys113, and Asp155.

Belongs to the zinc-containing alcohol dehydrogenase family. Homotetramer. Dimer of dimers. Zn(2+) is required as a cofactor.

It catalyses the reaction D-arabinose + NADP(+) = D-arabinono-1,4-lactone + NADPH + H(+). Functionally, participates in a pentose oxidation pathway that converts D-arabinose to 2-oxoglutarate. Catalyzes the NADP-dependent conversion of D-arabinose to D-arabinono-1,4-lactone. In vitro, can also use L-fucose, L-galactose and D-ribose. Shows highest activity with L-fucose, in combinaison with NAD, and lower activity toward L-galactose and D-ribose. When acting on its physiological substrate, D-arabinose, shows a clear preference for NADP over NAD. This is D-arabinose 1-dehydrogenase (NADP(+)) from Saccharolobus solfataricus (strain ATCC 35092 / DSM 1617 / JCM 11322 / P2) (Sulfolobus solfataricus).